The chain runs to 185 residues: HTH-type transcriptional regulator SAR2658 (185 aa).

Residues 6–66 form the HTH tetR-type domain; sequence KENRQRIEEI…YVIQRDLDIF (61 aa). The H-T-H motif DNA-binding region spans 29 to 48; sequence SMNRIAKELGIGMGTLYRHF.

This Staphylococcus aureus (strain MRSA252) protein is HTH-type transcriptional regulator SAR2658.